A 645-amino-acid chain; its full sequence is Envelope glycoprotein (645 aa).

The signal sequence occupies residues 1 to 33 (MESPAFSKPLKDKINPWGPLIIMGILVRAGASV). The tract at residues 32-237 (SVQRDSPHQV…QVLNVGPRVP (206 aa)) is receptor-binding domain (RBD). The Extracellular segment spans residues 34-585 (QRDSPHQVFN…FNRSPWFTTL (552 aa)). N-linked (GlcNAc...) asparagine; by host glycosylation is found at asparagine 43 and asparagine 58. Intrachain disulfides connect cysteine 113/cysteine 130 and cysteine 122/cysteine 135. The disordered stretch occupies residues 260–285 (RTPRPPPSGAASMVPGAPPPSQQPGT). N-linked (GlcNAc...) asparagine; by host glycosylation is present at asparagine 301. 6 disulfides stabilise this stretch: cysteine 311–cysteine 314, cysteine 311–cysteine 538, cysteine 341–cysteine 395, cysteine 360–cysteine 372, cysteine 402–cysteine 415, and cysteine 530–cysteine 537. The short motif at 311-314 (CWLC) is the CXXC element. Residues asparagine 333 and asparagine 340 are each glycosylated (N-linked (GlcNAc...) asparagine; by host). 2 N-linked (GlcNAc...) asparagine; by host glycosylation sites follow: asparagine 373 and asparagine 409. Residues 447–467 (VSLTLALLLGGLTMGGIAAGV) are fusion peptide. Residues 490 to 510 (DLGALEKSVSALEKSLTSLSE) adopt a coiled-coil conformation. Residues 513-529 (LQNRRGLDLLFLKEGGL) are immunosuppression. The CX6CC signature appears at 530 to 538 (CAALKEECC). A helical membrane pass occupies residues 586–606 (ISTIMGPLIVLLLILLFGPCI). A lipid anchor (S-palmitoyl cysteine; by host) is attached at cysteine 605. At 607–640 (LNRLVQFVKDRISVVQALVLTQQYHQLKSIDPEE) the chain is on the cytoplasmic side. The YXXL motif; contains endocytosis signal motif lies at 630–633 (YHQL).

As to quaternary structure, the mature envelope protein (Env) consists of a trimer of SU-TM heterodimers attached by a labile interchain disulfide bond. The activated Env consists of SU monomers and TM trimers. In terms of processing, specific enzymatic cleavages in vivo yield mature proteins. Envelope glycoproteins are synthesized as an inactive precursor that is N-glycosylated and processed likely by host cell furin or by a furin-like protease in the Golgi to yield the mature SU and TM proteins. The cleavage site between SU and TM requires the minimal sequence [KR]-X-[KR]-R. The R-peptide is released from the C-terminus of the cytoplasmic tail of the TM protein upon particle formation as a result of proteolytic cleavage by the viral protease. Cleavage of this peptide is required for TM to become fusogenic. The CXXC motif is highly conserved across a broad range of retroviral envelope proteins. It is thought to participate in the formation of a labile disulfide bond possibly with the CX6CC motif present in the transmembrane protein. Isomerization of the intersubunit disulfide bond to an SU intrachain disulfide bond is thought to occur upon receptor recognition in order to allow membrane fusion. Post-translationally, the transmembrane protein is palmitoylated. In terms of processing, the R-peptide is palmitoylated.

Its subcellular location is the virion membrane. It localises to the host cell membrane. In terms of biological role, the surface protein (SU) attaches the virus to the host cell by binding to its receptor. This interaction activates a thiol in a CXXC motif of the C-terminal domain, where the other Cys residue participates in the formation of the intersubunit disulfide. The activated thiol will attack the disulfide and cause its isomerization into a disulfide isomer within the motif. This leads to SU displacement and TM refolding, and is thought to activate its fusogenic potential by unmasking its fusion peptide. Fusion occurs at the host cell plasma membrane. The transmembrane protein (TM) acts as a class I viral fusion protein. Under the current model, the protein has at least 3 conformational states: pre-fusion native state, pre-hairpin intermediate state, and post-fusion hairpin state. During viral and target cell membrane fusion, the coiled coil regions (heptad repeats) assume a trimer-of-hairpins structure, positioning the fusion peptide in close proximity to the C-terminal region of the ectodomain. The formation of this structure appears to drive apposition and subsequent fusion of viral and target cell membranes. Membranes fusion leads to delivery of the nucleocapsid into the cytoplasm. The chain is Envelope glycoprotein (env) from Homo sapiens (Human).